The following is a 461-amino-acid chain: Cysteine--tRNA ligase (461 aa).

Cys28 lines the Zn(2+) pocket. Residues 30 to 40 carry the 'HIGH' region motif; it reads ITVYDLCHIGH. Zn(2+)-binding residues include Cys209, His234, and Glu238. The 'KMSKS' region motif lies at 266 to 270; that stretch reads KMSKS. Lys269 contacts ATP.

Belongs to the class-I aminoacyl-tRNA synthetase family. Monomer. The cofactor is Zn(2+).

Its subcellular location is the cytoplasm. The catalysed reaction is tRNA(Cys) + L-cysteine + ATP = L-cysteinyl-tRNA(Cys) + AMP + diphosphate. The protein is Cysteine--tRNA ligase of Salmonella arizonae (strain ATCC BAA-731 / CDC346-86 / RSK2980).